A 435-amino-acid polypeptide reads, in one-letter code: MDRDYISELPDSLLTQILLELRTKDSVKTSVLSKRWRNLWLNVPGLELFTLQFTYPDREEIFVRFMDRFMEFKCRSRLKKFMITYVDCKGYRDRLMELIGTLVDHGLQHLYVFMHTFDRVDFKRQNIYKSKTLVSLKLHNVELKNSDFVVSLPCLKILKLENICHGEDGPLVVEKLISGCSVLEDLELIRPFDIRTHKVLLLLRVSSQTLKSFTLHFAIYKDRTDFSVEIDAPRLKYMTVEQSQSDSIVVKNLSSLFSIDIGTKFNPLRHEDLRMRNVFYDFLTGISSVKHMIICLWSLQRFSPYSKPGLIPKFQNLYHLKAQMWSSSTHLLEAFLESCPNLKNLILEYNVELDREQVDFTNVPQCLISTLEYVEIKEPNEKSTIKLVNYFLENSAVLKKLTLRFSYSSSIYLKSYKKLLTSTKLSPTCQVIFGC.

Residues 3-49 (RDYISELPDSLLTQILLELRTKDSVKTSVLSKRWRNLWLNVPGLELF) form the F-box domain. 6 LRR repeats span residues 88-114 (CKGY…YVFM), 138-162 (LHNV…KLEN), 165-190 (HGED…ELIR), 191-217 (PFDI…TLHF), 250-275 (VKNL…DLRM), and 324-349 (MWSS…ILEY). The FBD domain occupies 355–405 (REQVDFTNVPQCLISTLEYVEIKEPNEKSTIKLVNYFLENSAVLKKLTLRF).

In Arabidopsis thaliana (Mouse-ear cress), this protein is F-box/FBD/LRR-repeat protein At5g44980.